A 432-amino-acid polypeptide reads, in one-letter code: D-amino acid dehydrogenase (432 aa).

3–17 contacts FAD; sequence VVILGSGVVGVASAW.

Belongs to the DadA oxidoreductase family. FAD serves as cofactor.

The enzyme catalyses a D-alpha-amino acid + A + H2O = a 2-oxocarboxylate + AH2 + NH4(+). It functions in the pathway amino-acid degradation; D-alanine degradation; NH(3) and pyruvate from D-alanine: step 1/1. In terms of biological role, oxidative deamination of D-amino acids. This chain is D-amino acid dehydrogenase, found in Shigella sonnei (strain Ss046).